The following is a 231-amino-acid chain: NADH-ubiquinone oxidoreductase chain 4 (231 aa).

7 consecutive transmembrane segments (helical) span residues 1 to 21, 34 to 54, 63 to 85, 89 to 111, 128 to 148, 169 to 189, and 211 to 231; these read PIAGSMILAAILLKLGGYGII, VFLPFIVLALWGAILANLTCL, IAYSSISHMGLVVAAIIIQTPWG, AMALMIAHGFTSSALFCLANTTY, MMPMATTWWLMANLMNIAIPP, TIIMLGLSMLITASYSLHMFL, and LLMTLHLIPLLMISFKPELVT.

This sequence belongs to the complex I subunit 4 family.

It is found in the mitochondrion membrane. It catalyses the reaction a ubiquinone + NADH + 5 H(+)(in) = a ubiquinol + NAD(+) + 4 H(+)(out). Functionally, core subunit of the mitochondrial membrane respiratory chain NADH dehydrogenase (Complex I) that is believed to belong to the minimal assembly required for catalysis. Complex I functions in the transfer of electrons from NADH to the respiratory chain. The immediate electron acceptor for the enzyme is believed to be ubiquinone. The sequence is that of NADH-ubiquinone oxidoreductase chain 4 (MT-ND4) from Sistrurus miliarius (Pigmy rattlesnake).